The sequence spans 142 residues: Matrix protein (142 aa).

Homooligomer. Forms homotetramers. Interacts with phosphoprotein P. Binds to ssRNA.

The protein resides in the virion. It localises to the host cytoplasm. Its subcellular location is the host cell membrane. The protein localises to the host nucleus. Its function is as follows. Plays a crucial role in virion assembly and budding. This is Matrix protein (M) from Borna disease virus (strain V) (BDV).